Consider the following 386-residue polypeptide: MTKRRVVVGMSGGVDSSVTAWLLKEQGYDVIGLFMKNWEDDDDGEYCSTRQDWIDVVSVADLIGIDVEAVNFAAEYKDRVFAEFLREYSAGRTPNPDVLCNAEIKFKAFLDHAMSLGAETIATGHYARVRERDGRFELLKAFDHTKDQSYFLHRLNQAQLSKTMFPLGEIPKTKVREIAAQIGLPNAKKKDSTGICFIGERPFRDFLNRYLPTQPGPMKTPDGKTVGEHIGLAFYTFGQRKGIGLGGSKDGSGEPWFVAAKDIASNTLYVVQGHDHPWLRSRELVAGNVSWVAGEPPSDGARCGAKTRYRQADAPCAFSSAAPGEAAGGERFSLVFDEPQWAVTPGQSAVLYDGDVCLGGGIIEAAATGRPDAAPASCESALAEAR.

ATP-binding positions include 9-16 and methionine 35; that span reads GMSGGVDS. The interval 95-97 is interaction with target base in tRNA; it reads NPD. The active-site Nucleophile is cysteine 100. Cysteine 100 and cysteine 196 are joined by a disulfide. Glycine 124 provides a ligand contact to ATP. Residues 146 to 148 form an interaction with tRNA region; it reads KDQ. Cysteine 196 serves as the catalytic Cysteine persulfide intermediate. Residues 308–309 are interaction with tRNA; sequence RY.

The protein belongs to the MnmA/TRMU family.

The protein localises to the cytoplasm. It catalyses the reaction S-sulfanyl-L-cysteinyl-[protein] + uridine(34) in tRNA + AH2 + ATP = 2-thiouridine(34) in tRNA + L-cysteinyl-[protein] + A + AMP + diphosphate + H(+). Functionally, catalyzes the 2-thiolation of uridine at the wobble position (U34) of tRNA, leading to the formation of s(2)U34. The polypeptide is tRNA-specific 2-thiouridylase MnmA (Burkholderia thailandensis (strain ATCC 700388 / DSM 13276 / CCUG 48851 / CIP 106301 / E264)).